Consider the following 281-residue polypeptide: Glutamate racemase (281 aa).

Substrate is bound by residues 13 to 14 and 45 to 46; these read DS and YG. The active-site Proton donor/acceptor is Cys76. Residue 77-78 coordinates substrate; the sequence is NT. Cys185 serves as the catalytic Proton donor/acceptor. 186–187 is a binding site for substrate; that stretch reads TH.

It belongs to the aspartate/glutamate racemases family.

It catalyses the reaction L-glutamate = D-glutamate. Its pathway is cell wall biogenesis; peptidoglycan biosynthesis. Provides the (R)-glutamate required for cell wall biosynthesis. The sequence is that of Glutamate racemase from Rippkaea orientalis (strain PCC 8801 / RF-1) (Cyanothece sp. (strain PCC 8801)).